A 561-amino-acid chain; its full sequence is DNA ligase B (561 aa).

K125 serves as the catalytic N6-AMP-lysine intermediate.

It belongs to the NAD-dependent DNA ligase family. LigB subfamily.

It catalyses the reaction NAD(+) + (deoxyribonucleotide)n-3'-hydroxyl + 5'-phospho-(deoxyribonucleotide)m = (deoxyribonucleotide)n+m + AMP + beta-nicotinamide D-nucleotide.. Functionally, catalyzes the formation of phosphodiester linkages between 5'-phosphoryl and 3'-hydroxyl groups in double-stranded DNA using NAD as a coenzyme and as the energy source for the reaction. In Escherichia coli O127:H6 (strain E2348/69 / EPEC), this protein is DNA ligase B.